We begin with the raw amino-acid sequence, 301 residues long: Sulfate adenylyltransferase subunit 2 (301 aa).

This sequence belongs to the PAPS reductase family. CysD subfamily. Heterodimer composed of CysD, the smaller subunit, and CysN.

It carries out the reaction sulfate + ATP + H(+) = adenosine 5'-phosphosulfate + diphosphate. The protein operates within sulfur metabolism; hydrogen sulfide biosynthesis; sulfite from sulfate: step 1/3. Functionally, with CysN forms the ATP sulfurylase (ATPS) that catalyzes the adenylation of sulfate producing adenosine 5'-phosphosulfate (APS) and diphosphate, the first enzymatic step in sulfur assimilation pathway. APS synthesis involves the formation of a high-energy phosphoric-sulfuric acid anhydride bond driven by GTP hydrolysis by CysN coupled to ATP hydrolysis by CysD. In Shewanella loihica (strain ATCC BAA-1088 / PV-4), this protein is Sulfate adenylyltransferase subunit 2.